Reading from the N-terminus, the 173-residue chain is SPbeta prophage-derived putative HNH homing endonuclease YosQ (173 aa).

In terms of biological role, a possible homing endonuclease, it is entirely encoded within the YosP intron. The protein is SPbeta prophage-derived putative HNH homing endonuclease YosQ (yosQ) of Bacillus subtilis (strain 168).